A 572-amino-acid chain; its full sequence is Proline--tRNA ligase (572 aa).

Belongs to the class-II aminoacyl-tRNA synthetase family. ProS type 1 subfamily. As to quaternary structure, homodimer.

The protein localises to the cytoplasm. It carries out the reaction tRNA(Pro) + L-proline + ATP = L-prolyl-tRNA(Pro) + AMP + diphosphate. Functionally, catalyzes the attachment of proline to tRNA(Pro) in a two-step reaction: proline is first activated by ATP to form Pro-AMP and then transferred to the acceptor end of tRNA(Pro). As ProRS can inadvertently accommodate and process non-cognate amino acids such as alanine and cysteine, to avoid such errors it has two additional distinct editing activities against alanine. One activity is designated as 'pretransfer' editing and involves the tRNA(Pro)-independent hydrolysis of activated Ala-AMP. The other activity is designated 'posttransfer' editing and involves deacylation of mischarged Ala-tRNA(Pro). The misacylated Cys-tRNA(Pro) is not edited by ProRS. This chain is Proline--tRNA ligase, found in Photorhabdus laumondii subsp. laumondii (strain DSM 15139 / CIP 105565 / TT01) (Photorhabdus luminescens subsp. laumondii).